We begin with the raw amino-acid sequence, 187 residues long: Thioredoxin F, chloroplastic (187 aa).

The transit peptide at 1 to 72 directs the protein to the chloroplast; the sequence is MALRLSVSSS…GSDTATVGAE (72 aa). In terms of domain architecture, Thioredoxin spans 73–186; the sequence is AEAVAVTGQV…LIQAIETVKS (114 aa). Active-site nucleophile residues include Cys111 and Cys114. A disulfide bridge connects residues Cys111 and Cys114.

The protein belongs to the thioredoxin family. Plant F-type subfamily.

The protein resides in the plastid. It localises to the chloroplast. Thiol-disulfide oxidoreductase involved in the redox regulation of enzymes of both reductive pentose phosphate pathway (Calvin-Benson cycle) and oxidative pentose phosphate pathway. This Oryza sativa subsp. japonica (Rice) protein is Thioredoxin F, chloroplastic.